Consider the following 205-residue polypeptide: Holliday junction branch migration complex subunit RuvA (205 aa).

Positions 1–64 (MIGKLKGIID…EDQIKLFGFR (64 aa)) are domain I. Residues 65–143 (TDTEREWFRL…ALSAVDPAVV (79 aa)) form a domain II region. The tract at residues 144–154 (KLSGAIDDNRA) is flexible linker. Positions 154 to 205 (APRAVTDAISALVNLGYGQPQAAAAVATASRTAGEDAETAQLIKLGLKELSK) are domain III.

This sequence belongs to the RuvA family. In terms of assembly, homotetramer. Forms an RuvA(8)-RuvB(12)-Holliday junction (HJ) complex. HJ DNA is sandwiched between 2 RuvA tetramers; dsDNA enters through RuvA and exits via RuvB. An RuvB hexamer assembles on each DNA strand where it exits the tetramer. Each RuvB hexamer is contacted by two RuvA subunits (via domain III) on 2 adjacent RuvB subunits; this complex drives branch migration. In the full resolvosome a probable DNA-RuvA(4)-RuvB(12)-RuvC(2) complex forms which resolves the HJ.

Its subcellular location is the cytoplasm. The RuvA-RuvB-RuvC complex processes Holliday junction (HJ) DNA during genetic recombination and DNA repair, while the RuvA-RuvB complex plays an important role in the rescue of blocked DNA replication forks via replication fork reversal (RFR). RuvA specifically binds to HJ cruciform DNA, conferring on it an open structure. The RuvB hexamer acts as an ATP-dependent pump, pulling dsDNA into and through the RuvAB complex. HJ branch migration allows RuvC to scan DNA until it finds its consensus sequence, where it cleaves and resolves the cruciform DNA. In Rhodopseudomonas palustris (strain TIE-1), this protein is Holliday junction branch migration complex subunit RuvA.